Consider the following 371-residue polypeptide: N-acetyldiaminopimelate deacetylase (371 aa).

The active site involves aspartate 68. The Proton acceptor role is filled by glutamate 127.

Belongs to the peptidase M20A family. N-acetyldiaminopimelate deacetylase subfamily.

It carries out the reaction N-acetyl-(2S,6S)-2,6-diaminopimelate + H2O = (2S,6S)-2,6-diaminopimelate + acetate. The protein operates within amino-acid biosynthesis; L-lysine biosynthesis via DAP pathway; LL-2,6-diaminopimelate from (S)-tetrahydrodipicolinate (acetylase route): step 3/3. Functionally, catalyzes the conversion of N-acetyl-diaminopimelate to diaminopimelate and acetate. The chain is N-acetyldiaminopimelate deacetylase from Listeria monocytogenes serovar 1/2a (strain ATCC BAA-679 / EGD-e).